Consider the following 428-residue polypeptide: Peptidase B (428 aa).

The Mn(2+) site is built by K195 and D200. The active site involves K207. The Mn(2+) site is built by D218, D277, and E279. R281 is a catalytic residue.

Belongs to the peptidase M17 family. In terms of assembly, homohexamer. The cofactor is Mn(2+).

It is found in the cytoplasm. The enzyme catalyses Release of an N-terminal amino acid, Xaa, from a peptide or arylamide. Xaa is preferably Glu or Asp but may be other amino acids, including Leu, Met, His, Cys and Gln.. Probably plays an important role in intracellular peptide degradation. In Cronobacter sakazakii (strain ATCC BAA-894) (Enterobacter sakazakii), this protein is Peptidase B.